Reading from the N-terminus, the 218-residue chain is Large ribosomal subunit protein uL3 (218 aa).

Residues 127–167 (GFSRGPMSHGSKNHRLPGSIGAGTTPGRVYPGKRMAGRMGG) are disordered.

It belongs to the universal ribosomal protein uL3 family. In terms of assembly, part of the 50S ribosomal subunit. Forms a cluster with proteins L14 and L19.

One of the primary rRNA binding proteins, it binds directly near the 3'-end of the 23S rRNA, where it nucleates assembly of the 50S subunit. The chain is Large ribosomal subunit protein uL3 from Prochlorococcus marinus (strain NATL1A).